Reading from the N-terminus, the 1295-residue chain is MNEVNDFDAIRISLASPDQIRSWSYGEVTKPETINYRTLKPERDGLFCERIFGPIKDFECACGKYKRIRYKGIICDKCGVEIARAKVRRERMGHIELACPVGHIWFTRGIPSRVGLLLNLSTRSLERIIYYSHFIITGVNDEAREKAIKDLEVISSQRVADKGSEVDTRVAQMEAEDATVEAINQVRRDFSTEREQMEEDIQLLIDQLKDLQIGNLLTENQYYELKQRFSNVFEASMGAEALLKLLSYIDMDKERSKLIQETRSTSGQRRKKAGKQLQLVEAFRRSSNKPEWMIMTVLPVLPPDLRPMVQLDGGRFATSDLNDLYRRVINRNNRLQHLMEIGAPEIIIRNEKRMLQEAVDSLIDNGRRGKSVAVNGDHKAKSLSDLLRGKQGRFRQNLLGKRVDYSGRSVIVVGPSLKLSQCGLPRRMALELFKPFVMHRLVRDGLAPNIKSARRLVERARPEVYDILEEVVKERPVMLNRAPTLHRLSIQAFEPVLIDGSALRLHPLVCSAFNADFDGDQMAVHVPLSKAAVKEARETMLSIHNMMLPSSGEPVVSPSLDMVFGCYYLTTTRPGAKGEGKIFSDFEEAKHYYEMGIIDLRAIIKVRDGKGNMLETTTGRIIFNDVLPKEVEFQNMDIPKSAIKKIIGRCYKILSSQDMAVMLDKIKQLGFKYATSSGISIAMSDISVPREKAKLVAAADERTAISEGQFARGLITEDERYNSIIETWMETTDRITDAIQAGFDKQGSVYMMANSGAKGNISQIRQMAGLRGLMTNPSGRIIDFPIKSSLREGLTTLEYFISTHGARKGLADTALRTSGSGYLTRRLIDVTQDVIILQEDCGTSNGTWIVEPKEKGMLPPLVDRVLGRWAAHNVVHPQTGEIIVGNNEEIDEAKAKAIGEAGITEVFVRSPLTCEATHGMCRRCYGRDLGRVRLVDMNTAVGIIAAQSIGEPGTQLTLRTFHTGGVVGVDITTGLPRVEELFEARPPKVQSIISEIDGEAEVIENENGRHIRIFSDEVYQDEYELPSGWKTQVQSGQWVDSGMVLASPEMEGKSKAVVQSDQNVVARVAGEVSVDGSLITIKYSESEEREYAIPAAMQIKVKTGDSVRAGQQLTDGSINPQDILSILGRDAVQKYLVEEVQKVYYSQGVHINDKHIEVIARQMLIKVRIDSSGDTDLVPGELVDKFRYEDINAKVLAEGGEPATAHTVLMGITRASLSTESWLAAASFQETTRVLTDAAIYGKVDKLSGLKENVIIGKLIPAQCKSCKEATVERAERIAAAAAAPAVSTLPENCL.

Zn(2+) contacts are provided by C60, C62, C75, and C78. Mg(2+)-binding residues include D516, D518, and D520. Zn(2+) contacts are provided by C841, C914, C921, and C924.

It belongs to the RNA polymerase beta' chain family. In terms of assembly, the RNAP catalytic core consists of 2 alpha, 1 beta, 1 beta' and 1 omega subunit. When a sigma factor is associated with the core the holoenzyme is formed, which can initiate transcription. Requires Mg(2+) as cofactor. Zn(2+) is required as a cofactor.

It catalyses the reaction RNA(n) + a ribonucleoside 5'-triphosphate = RNA(n+1) + diphosphate. In terms of biological role, DNA-dependent RNA polymerase catalyzes the transcription of DNA into RNA using the four ribonucleoside triphosphates as substrates. The protein is DNA-directed RNA polymerase subunit beta' of Dehalococcoides mccartyi (strain ATCC BAA-2266 / KCTC 15142 / 195) (Dehalococcoides ethenogenes (strain 195)).